Here is a 478-residue protein sequence, read N- to C-terminus: Cytochrome c-552 (478 aa).

The N-terminal stretch at M1 to A26 is a signal peptide. Position 94 (H94) interacts with heme c. Heme is bound by residues C122, C125, and K126. 6 residues coordinate heme c: C160, C163, H164, C209, C212, and H213. Ca(2+)-binding residues include E215, Y216, K261, and Q263. Y216 contacts substrate. Residue H264 coordinates substrate. Heme c is bound by residues H275, C282, C285, H286, H301, C314, C317, H318, and H393.

This sequence belongs to the cytochrome c-552 family. The cofactor is Ca(2+). It depends on heme c as a cofactor.

Its subcellular location is the periplasm. The enzyme catalyses 6 Fe(III)-[cytochrome c] + NH4(+) + 2 H2O = 6 Fe(II)-[cytochrome c] + nitrite + 8 H(+). It participates in nitrogen metabolism; nitrate reduction (assimilation). In terms of biological role, catalyzes the reduction of nitrite to ammonia, consuming six electrons in the process. The sequence is that of Cytochrome c-552 from Citrobacter koseri (strain ATCC BAA-895 / CDC 4225-83 / SGSC4696).